We begin with the raw amino-acid sequence, 527 residues long: GMP synthase [glutamine-hydrolyzing] (527 aa).

One can recognise a Glutamine amidotransferase type-1 domain in the interval 13 to 202; the sequence is TILVLDFGSQ…AVDICGAAQK (190 aa). Residue Cys89 is the Nucleophile of the active site. Active-site residues include His176 and Glu178. The 200-residue stretch at 203–402 folds into the GMPS ATP-PPase domain; it reads WSMENFVDTE…MGIPHDLVWR (200 aa). 231–237 provides a ligand contact to ATP; that stretch reads SGGVDST. 4 residues coordinate XMP: Arg304, Asp464, Lys519, and Glu525.

As to quaternary structure, homodimer. It depends on Mg(2+) as a cofactor.

Its subcellular location is the cytoplasm. The protein resides in the cytosol. It catalyses the reaction XMP + L-glutamine + ATP + H2O = GMP + L-glutamate + AMP + diphosphate + 2 H(+). It functions in the pathway purine metabolism; GMP biosynthesis; GMP from XMP (L-Gln route): step 1/1. Catalyzes the conversion of xanthine monophosphate (XMP) to GMP in the presence of glutamine and ATP through an adenyl-XMP intermediate. The protein is GMP synthase [glutamine-hydrolyzing] (GUA1) of Yarrowia lipolytica (strain CLIB 122 / E 150) (Yeast).